The sequence spans 245 residues: 1-(5-phosphoribosyl)-5-[(5-phosphoribosylamino)methylideneamino] imidazole-4-carboxamide isomerase (245 aa).

Catalysis depends on Asp8, which acts as the Proton acceptor. The active-site Proton donor is Asp130.

The protein belongs to the HisA/HisF family.

It is found in the cytoplasm. The catalysed reaction is 1-(5-phospho-beta-D-ribosyl)-5-[(5-phospho-beta-D-ribosylamino)methylideneamino]imidazole-4-carboxamide = 5-[(5-phospho-1-deoxy-D-ribulos-1-ylimino)methylamino]-1-(5-phospho-beta-D-ribosyl)imidazole-4-carboxamide. It functions in the pathway amino-acid biosynthesis; L-histidine biosynthesis; L-histidine from 5-phospho-alpha-D-ribose 1-diphosphate: step 4/9. This Teredinibacter turnerae (strain ATCC 39867 / T7901) protein is 1-(5-phosphoribosyl)-5-[(5-phosphoribosylamino)methylideneamino] imidazole-4-carboxamide isomerase.